Here is a 389-residue protein sequence, read N- to C-terminus: MKLALIGIGQAGGKVVDALVDYERRTKTGFVVDAIAVNSARADLRGLRTAPESRQVLVGLTRVKGHGVGADNELGAEVIAEDVGEVLSMIDDLPVHEIDAFLVVAGLGGGTGSGGAPVIARELKHIYTEPVYGLGILPARDEGGIYTLNAARSFQTFVREVDNLIVFDNDAWRKTGESLEAGYGSLNAELARRLGVLFSAGEGDGSGAVAESVVDASEIINTLGSGGVSTIGYAAVELDRPKRGLLSRLSGGKAEADDGGDSTNRITSLVRRAALGRLTLPCEISGAERGLVVVAGPSDVLSRRGIERARTWLEDETGTMEIRGGDYPIDSNFVAAVVLLSGVYDVPRVKELQAVAIETQRDMLAKRESSAASLDDLVSTGDDRIEPLF.

GTP is bound by residues 10–14 (QAGGK), 110–112 (GTG), Glu-142, Asn-169, and Asn-187.

It belongs to the CetZ family.

It localises to the cytoplasm. Involved in cell shape control. The polypeptide is Tubulin-like protein CetZ3 (Haloferax volcanii (strain ATCC 29605 / DSM 3757 / JCM 8879 / NBRC 14742 / NCIMB 2012 / VKM B-1768 / DS2) (Halobacterium volcanii)).